A 150-amino-acid polypeptide reads, in one-letter code: D-aminoacyl-tRNA deacylase (150 aa).

The Gly-cisPro motif, important for rejection of L-amino acids signature appears at 133 to 134 (GP).

Belongs to the DTD family. Homodimer.

The protein localises to the cytoplasm. It carries out the reaction glycyl-tRNA(Ala) + H2O = tRNA(Ala) + glycine + H(+). The enzyme catalyses a D-aminoacyl-tRNA + H2O = a tRNA + a D-alpha-amino acid + H(+). Functionally, an aminoacyl-tRNA editing enzyme that deacylates mischarged D-aminoacyl-tRNAs. Also deacylates mischarged glycyl-tRNA(Ala), protecting cells against glycine mischarging by AlaRS. Acts via tRNA-based rather than protein-based catalysis; rejects L-amino acids rather than detecting D-amino acids in the active site. By recycling D-aminoacyl-tRNA to D-amino acids and free tRNA molecules, this enzyme counteracts the toxicity associated with the formation of D-aminoacyl-tRNA entities in vivo and helps enforce protein L-homochirality. This Micrococcus luteus (strain ATCC 4698 / DSM 20030 / JCM 1464 / CCM 169 / CCUG 5858 / IAM 1056 / NBRC 3333 / NCIMB 9278 / NCTC 2665 / VKM Ac-2230) (Micrococcus lysodeikticus) protein is D-aminoacyl-tRNA deacylase.